The chain runs to 101 residues: uncharacterized protein (101 aa).

An N-terminal signal peptide occupies residues 1-23 (MERRTGVVLIIFVTFCEAMMARA). Residues 38-58 (FLLFIIHTSCTMVAFIIGNLA) form a helical membrane-spanning segment.

It is found in the host membrane. This is an uncharacterized protein from Cryphonectria parasitica (Chestnut blight fungus).